The following is a 405-amino-acid chain: L-carnitine CoA-transferase (405 aa).

CoA is bound by residues K97 and R104. The active-site Nucleophile is D169.

The protein belongs to the CoA-transferase III family. CaiB subfamily. In terms of assembly, homodimer.

It is found in the cytoplasm. The catalysed reaction is crotonobetainyl-CoA + (R)-carnitine = crotonobetaine + (R)-carnitinyl-CoA. It carries out the reaction 4-(trimethylamino)butanoyl-CoA + (R)-carnitine = (R)-carnitinyl-CoA + 4-(trimethylamino)butanoate. Its pathway is amine and polyamine metabolism; carnitine metabolism. Functionally, catalyzes the reversible transfer of the CoA moiety from gamma-butyrobetainyl-CoA to L-carnitine to generate L-carnitinyl-CoA and gamma-butyrobetaine. Is also able to catalyze the reversible transfer of the CoA moiety from gamma-butyrobetainyl-CoA or L-carnitinyl-CoA to crotonobetaine to generate crotonobetainyl-CoA. This is L-carnitine CoA-transferase from Escherichia coli O17:K52:H18 (strain UMN026 / ExPEC).